The chain runs to 190 residues: TATA box-binding protein-like 1 (190 aa).

Belongs to the TBP family. In terms of assembly, binds TFIIA and TFIIB.

It is found in the cytoplasm. Its subcellular location is the nucleus. Part of a specialized transcription system that mediates the transcription of most ribosomal proteins through the 5'-TCT-3' motif which is a core promoter element at these genes. Seems to also mediate the transcription of NF1. Does not bind the TATA box. This is TATA box-binding protein-like 1 (TBPL1) from Pongo abelii (Sumatran orangutan).